Here is a 962-residue protein sequence, read N- to C-terminus: Phosphatidylinositol 3,4,5-trisphosphate 3-phosphatase and dual-specificity protein phosphatase daf-18 (962 aa).

The tract at residues 1-37 (MVTPPPDVPSTSTRSMARDLQENPNRQPGEPRVSEPY) is disordered. In terms of domain architecture, Phosphatase tensin-type spans 58–230 (CRTEYQNIDL…YYYHKLRERE (173 aa)). Cysteine 169 acts as the Phosphocysteine intermediate in catalysis. The 297-residue stretch at 234 to 530 (LPLRMQLIGV…GMKLHVVLRC (297 aa)) folds into the C2 tensin-type domain. 2 disordered regions span residues 382–416 (DTSIGRKNGMRRNETPMRKIDPETGNEFESPWQIV) and 689–731 (IENT…RLPD). Basic and acidic residues predominate over residues 392 to 403 (RRNETPMRKIDP). The segment covering 692–704 (TGPSTSGSSAPGT) has biased composition (low complexity). A compositionally biased stretch (basic and acidic residues) spans 706–720 (KKTEASQSDKVKPAT).

This sequence belongs to the PTEN phosphatase protein family. In terms of assembly, interacts (via C-terminus) with vab-1 (via kinase domain); the interaction is independent of vab-1 kinase activity. Interacts with arr-1 and mpz-1; the interaction may inhibit daf-18. Interacts (via C-terminus) with daf-2 (via kinase domain). Phosphorylated by vab-1 on tyrosine residues which may promote daf-18 degradation. Expressed in embryo, larvae and in adult germline (at protein level). Expressed at equal levels in the 6 vulva precursor cells (VPCs) of L2 larvae and in the descendant cells of the induced VPCs (at protein level). Expressed in the uterus (at protein level). Expressed in the Z2/Z3 germline precursors, oocytes, several amphid neurons and weakly in the nerve cord (at protein level).

The protein resides in the perikaryon. The protein localises to the cell membrane. Its subcellular location is the cell projection. It localises to the axon. It is found in the dendrite. The protein resides in the cytoplasm. The protein localises to the nucleus. It carries out the reaction a 1,2-diacyl-sn-glycero-3-phospho-(1D-myo-inositol-3,4,5-trisphosphate) + H2O = a 1,2-diacyl-sn-glycero-3-phospho-(1D-myo-inositol-4,5-bisphosphate) + phosphate. The catalysed reaction is O-phospho-L-seryl-[protein] + H2O = L-seryl-[protein] + phosphate. The enzyme catalyses O-phospho-L-threonyl-[protein] + H2O = L-threonyl-[protein] + phosphate. It catalyses the reaction O-phospho-L-tyrosyl-[protein] + H2O = L-tyrosyl-[protein] + phosphate. It carries out the reaction 1,2-dioctanoyl-sn-glycero-3-phospho-(1D-myo-inositol-3,4,5-trisphosphate) + H2O = 1,2-dioctanoyl-sn-glycero-3-phospho-(1D-myo-inositol-4,5-bisphosphate) + phosphate. The catalysed reaction is 1,2-dihexadecanoyl-sn-glycero-3-phospho-(1D-myo-inositol-3,4,5-trisphosphate) + H2O = 1,2-dihexadecanoyl-sn-glycero-3-phospho-(1D-myo-inositol-4,5-bisphosphate) + phosphate. Its function is as follows. Acts as a dual-specificity protein phosphatase, dephosphorylating tyrosine-, serine- and threonine-phosphorylated proteins. Also acts as a lipid phosphatase, removing the phosphate in the D3 position of the inositol ring from phosphatidylinositol 3,4,5-trisphosphate. By dephosphorylating PtdIns(3,4,5)P3 antagonizes PtdIns(3,4,5)P3 production by age-1/PI3K and thus, negatively regulates daf-2-mediated processes including dauer formation, longevity, fat metabolism, chemotaxis towards salt, thermotolerance and axon guidance. Similarly, promotes apoptosis during embryonic development by suppressing the recruitment of the prosurvival kinases akt-1/2 to the plasma membrane. In addition, regulates Z2/Z3 germline precursor cell cycle by maintaining them arrested at the G2 stage and by controlling their growth during L1 diapause. After sperm depletion in larvae and adult hermaphrodites, promotes germline stem cell quiescence and oocyte accumulation. By dephosphorylating ephrin-like receptor vab-1 on tyrosine residues, negatively regulates oocyte maturation downstream of vab-1 and upstream of mpk-1, independently of daf-2. Plays a role in postembryonic muscle arm extensions. Required for neurite outgrowth during AIY interneuron embryonic development. Mainly independently of daf-2, negatively regulates vulva induction probably by inhibiting mpk-1 phosphorylation. Both lipid and protein phosphatase activities are required for the regulation of vulva induction. Plays a role in gonad and germline development following the L1 diapause. The polypeptide is Phosphatidylinositol 3,4,5-trisphosphate 3-phosphatase and dual-specificity protein phosphatase daf-18 (Caenorhabditis elegans).